Reading from the N-terminus, the 694-residue chain is Elongation factor G (694 aa).

The 280-residue stretch at 9-288 (DAIRNIGIMA…VIVKWLPSPL (280 aa)) folds into the tr-type G domain. Residues 18-25 (AHIDAGKT), 82-86 (DTPGH), and 136-139 (NKMD) contribute to the GTP site.

Belongs to the TRAFAC class translation factor GTPase superfamily. Classic translation factor GTPase family. EF-G/EF-2 subfamily.

The protein resides in the cytoplasm. Its function is as follows. Catalyzes the GTP-dependent ribosomal translocation step during translation elongation. During this step, the ribosome changes from the pre-translocational (PRE) to the post-translocational (POST) state as the newly formed A-site-bound peptidyl-tRNA and P-site-bound deacylated tRNA move to the P and E sites, respectively. Catalyzes the coordinated movement of the two tRNA molecules, the mRNA and conformational changes in the ribosome. The protein is Elongation factor G of Chlamydia trachomatis serovar L2b (strain UCH-1/proctitis).